The following is a 63-amino-acid chain: Large ribosomal subunit protein bL28 (63 aa).

The disordered stretch occupies residues 1-22 (MSRRCAITGKSAMNGHSVSHAN).

The protein belongs to the bacterial ribosomal protein bL28 family.

This is Large ribosomal subunit protein bL28 from Campylobacter hominis (strain ATCC BAA-381 / DSM 21671 / CCUG 45161 / LMG 19568 / NCTC 13146 / CH001A).